We begin with the raw amino-acid sequence, 464 residues long: Purple acid phosphatase (464 aa).

A signal peptide spans 1–30; sequence MGVVEGLLALALVLSACVMCNGGSSSPFIR. N-linked (GlcNAc...) asparagine glycans are attached at residues N108 and N136. D162 serves as a coordination point for Fe cation. N-linked (GlcNAc...) asparagine glycosylation occurs at N170. Fe cation contacts are provided by D191 and Y194. Zn(2+) is bound at residue D191. N228 lines the Zn(2+) pocket. Position 228 (N228) interacts with substrate. N301 carries N-linked (GlcNAc...) asparagine glycosylation. Position 313 (H313) interacts with Zn(2+). Residue H323 is the Proton donor of the active site. H350 provides a ligand contact to Zn(2+). 350-352 is a substrate binding site; that stretch reads HVH. H352 contributes to the Fe cation binding site. N-linked (GlcNAc...) asparagine glycosylation is found at N398 and N423.

Belongs to the metallophosphoesterase superfamily. Purple acid phosphatase family. As to quaternary structure, homodimer; disulfide-linked. It depends on Fe cation as a cofactor. Zn(2+) serves as cofactor. The cofactor is Mn(2+). Requires Cu(2+) as cofactor. Mg(2+) is required as a cofactor.

Its subcellular location is the secreted. The enzyme catalyses a phosphate monoester + H2O = an alcohol + phosphate. This Glycine max (Soybean) protein is Purple acid phosphatase.